The primary structure comprises 658 residues: Exoribonuclease 2 (658 aa).

Residues 189-530 (REDLTSLYFT…VNHRLIKQVL (342 aa)) form the RNB domain. Residues 576 to 658 (AVEFDCEIAD…ETRSIVGNII (83 aa)) form the S1 motif domain.

Belongs to the RNR ribonuclease family. RNase II subfamily.

It localises to the cytoplasm. The catalysed reaction is Exonucleolytic cleavage in the 3'- to 5'-direction to yield nucleoside 5'-phosphates.. Involved in mRNA degradation. Hydrolyzes single-stranded polyribonucleotides processively in the 3' to 5' direction. The sequence is that of Exoribonuclease 2 from Actinobacillus pleuropneumoniae serotype 3 (strain JL03).